Reading from the N-terminus, the 903-residue chain is Glutamate receptor ionotropic, NMDA 1 (903 aa).

Residues 1 to 20 (MGTMRLFLLAVLFLFSFARA) form the signal peptide. Residues 21 to 557 (GCDPKIVNIG…TLDSFMQPFQ (537 aa)) lie on the Extracellular side of the membrane. Residues asparagine 61, asparagine 203, asparagine 276, asparagine 300, asparagine 350, asparagine 368, asparagine 440, asparagine 469, and asparagine 489 are each glycosylated (N-linked (GlcNAc...) asparagine). Cysteines 79 and 308 form a disulfide. Disulfide bonds link cysteine 420-cysteine 452 and cysteine 436-cysteine 453. Residues proline 514, threonine 516, and arginine 521 each contribute to the glycine site. A helical transmembrane segment spans residues 558 to 578 (STLWLLVGLSVHVVAVMLYLL). Topologically, residues 579–600 (DRFSPFGRFKVNSEEEEEDALT) are cytoplasmic. The segment at 601-620 (LSSAMWFSWGVLLNSGIGEG) is pore-forming. Residues 601 to 622 (LSSAMWFSWGVLLNSGIGEGAP) constitute an intramembrane region (discontinuously helical). Over 623-628 (RSFSAR) the chain is Cytoplasmic. Residues 629–645 (ILGMVWAGFAMIIVASY) traverse the membrane as a helical segment. Residues 646 to 810 (TANLAAFLVL…NAPATLTFEN (165 aa)) lie on the Extracellular side of the membrane. The glycine site is built by serine 686 and aspartate 730. Residues cysteine 742 and cysteine 796 are joined by a disulfide bond. Residue asparagine 769 is glycosylated (N-linked (GlcNAc...) asparagine). A helical membrane pass occupies residues 811–831 (MAGVFMLVAGGIVAGIFLIFI). Residues 832 to 903 (EIAYKRHKDA…SSKDTVNVVV (72 aa)) are Cytoplasmic-facing.

This sequence belongs to the glutamate-gated ion channel (TC 1.A.10.1) family. NR1/GRIN1 subfamily. As to quaternary structure, heterotetramer; the NMDAR subunits are modular and harbor tiered domains that function in concert to regulate opening and closing of the cation-selective ion channel pore. Forms heterotetrameric channels composed of two GluN1/zeta subunits (GRIN1), and two identical GluN2/epsilon subunits (GRIN2A, GRIN2B, GRIN2C or GRIN2D) or GluN3 subunits (GRIN3A or GRIN3B) (in vitro). Does not form functional channels by itself. Can also form heterotetrameric channels that contain at least two GluN1 subunits and at least two different GluN2 subunits (or a combination of one GluN2 and one GluN3 subunits) (in vitro). In vivo, the subunit composition may vary in function of the expression levels of the different subunits.

The protein resides in the cell membrane. It localises to the postsynaptic cell membrane. It is found in the postsynaptic density membrane. The protein localises to the synaptic cell membrane. The catalysed reaction is Ca(2+)(in) = Ca(2+)(out). It carries out the reaction Na(+)(in) = Na(+)(out). It catalyses the reaction K(+)(in) = K(+)(out). With respect to regulation, NMDA glutamate receptor activity is modulated by zinc ions. The NMDA glutamate receptor activity of the heterotetramer with grin2b is stimulated by micromolar levels of Zn(2+). The NMDA glutamate receptor activity of the heterotetramer with grin2a is inhibited by nanomolar levels of Zn(2+). Component of N-methyl-D-aspartate (NMDA) receptors (NMDARs) that function as heterotetrameric, ligand-gated cation channels with high calcium permeability and voltage-dependent block by Mg(2+). NMDARs participate in synaptic plasticity. Channel activation requires binding of the neurotransmitter L-glutamate to the GluN2 subunit, glycine binding to the GluN1 subunit, plus membrane depolarization to eliminate channel inhibition by Mg(2+). NMDARs mediate simultaneously the potasium efflux and the influx of calcium and sodium. Each GluN2 or GluN3 subunit confers differential attributes to channel properties, including activation, deactivation and desensitization kinetics, pH sensitivity, Ca2(+) permeability, and binding to allosteric modulators. The protein is Glutamate receptor ionotropic, NMDA 1 of Xenopus laevis (African clawed frog).